The following is a 224-amino-acid chain: MAAAVPQRAWTVEQLRSEQLPKKDIIKFLQEHGSDSFLAEHKLLGNIKNVAKTANKDHLVTAYNHLFETKRFKGTESISKVSEQVKNVKLNEDKPKETKSEETLDEGPPKYTKSVLKKGDKTNFPKKGDVVHCWYTGTLQDGTVFDTNIQTSAKKKKNAKPLSFKVGVGKVIRGWDEALLTMSKGEKARLEIEPEWAYGKKGQPDAKIPPNAKLTFEVELVDID.

Alanine 2 carries the post-translational modification N-acetylalanine. Serine 36 is modified (phosphoserine). A compositionally biased stretch (basic and acidic residues) spans 89–102 (KLNEDKPKETKSEE). Positions 89–111 (KLNEDKPKETKSEETLDEGPPKY) are disordered. Lysine 99 bears the N6-acetyllysine mark. Residues 128 to 224 (GDVVHCWYTG…TFEVELVDID (97 aa)) enclose the PPIase FKBP-type domain. The residue at position 152 (serine 152) is a Phosphoserine. Lysine 170 is subject to N6-acetyllysine.

Belongs to the FKBP-type PPIase family.

It localises to the nucleus. The enzyme catalyses [protein]-peptidylproline (omega=180) = [protein]-peptidylproline (omega=0). With respect to regulation, inhibited preferentially by rapamycin over FK506. Functionally, FK506- and rapamycin-binding proteins (FKBPs) constitute a family of receptors for the two immunosuppressants which inhibit T-cell proliferation by arresting two distinct cytoplasmic signal transmission pathways. PPIases accelerate the folding of proteins. This chain is Peptidyl-prolyl cis-trans isomerase FKBP3 (FKBP3), found in Homo sapiens (Human).